Here is a 294-residue protein sequence, read N- to C-terminus: Ribosomal RNA small subunit methyltransferase H (294 aa).

Residues Gly36–His38, Asp55, Phe82, Asp97, and Gln104 contribute to the S-adenosyl-L-methionine site.

The protein belongs to the methyltransferase superfamily. RsmH family.

The protein localises to the cytoplasm. It catalyses the reaction cytidine(1402) in 16S rRNA + S-adenosyl-L-methionine = N(4)-methylcytidine(1402) in 16S rRNA + S-adenosyl-L-homocysteine + H(+). Specifically methylates the N4 position of cytidine in position 1402 (C1402) of 16S rRNA. In Synechococcus sp. (strain CC9605), this protein is Ribosomal RNA small subunit methyltransferase H.